Reading from the N-terminus, the 401-residue chain is Imidazolonepropionase (401 aa).

Residues histidine 66 and histidine 68 each coordinate Fe(3+). Positions 66 and 68 each coordinate Zn(2+). Positions 75, 138, and 171 each coordinate 4-imidazolone-5-propanoate. Tyrosine 138 contacts N-formimidoyl-L-glutamate. Histidine 236 contributes to the Fe(3+) binding site. Histidine 236 provides a ligand contact to Zn(2+). Residue glutamine 239 coordinates 4-imidazolone-5-propanoate. A Fe(3+)-binding site is contributed by aspartate 311. Aspartate 311 contacts Zn(2+). Residues asparagine 313 and glycine 315 each contribute to the N-formimidoyl-L-glutamate site. A 4-imidazolone-5-propanoate-binding site is contributed by threonine 316.

The protein belongs to the metallo-dependent hydrolases superfamily. HutI family. The cofactor is Zn(2+). Fe(3+) serves as cofactor.

It localises to the cytoplasm. It carries out the reaction 4-imidazolone-5-propanoate + H2O = N-formimidoyl-L-glutamate. Its pathway is amino-acid degradation; L-histidine degradation into L-glutamate; N-formimidoyl-L-glutamate from L-histidine: step 3/3. In terms of biological role, catalyzes the hydrolytic cleavage of the carbon-nitrogen bond in imidazolone-5-propanoate to yield N-formimidoyl-L-glutamate. It is the third step in the universal histidine degradation pathway. This chain is Imidazolonepropionase, found in Pseudomonas savastanoi pv. phaseolicola (strain 1448A / Race 6) (Pseudomonas syringae pv. phaseolicola (strain 1448A / Race 6)).